Consider the following 352-residue polypeptide: Alanine racemase (352 aa).

Lys33 (proton acceptor; specific for D-alanine) is an active-site residue. Position 33 is an N6-(pyridoxal phosphate)lysine (Lys33). A substrate-binding site is contributed by Arg129. Residue Tyr250 is the Proton acceptor; specific for L-alanine of the active site. Met298 is a binding site for substrate.

It belongs to the alanine racemase family. It depends on pyridoxal 5'-phosphate as a cofactor.

It carries out the reaction L-alanine = D-alanine. The protein operates within amino-acid biosynthesis; D-alanine biosynthesis; D-alanine from L-alanine: step 1/1. Catalyzes the interconversion of L-alanine and D-alanine. May also act on other amino acids. The polypeptide is Alanine racemase (alr) (Neisseria meningitidis serogroup B (strain ATCC BAA-335 / MC58)).